Consider the following 319-residue polypeptide: Ornithine carbamoyltransferase (319 aa).

Carbamoyl phosphate-binding positions include 63–66 (STRT), Gln-90, Arg-114, and 141–144 (HPCQ). L-ornithine contacts are provided by residues Asn-172, Asp-236, and 240-241 (SM). Residues 276–277 (CL) and Arg-304 contribute to the carbamoyl phosphate site.

The protein belongs to the aspartate/ornithine carbamoyltransferase superfamily. OTCase family.

It localises to the cytoplasm. The catalysed reaction is carbamoyl phosphate + L-ornithine = L-citrulline + phosphate + H(+). The protein operates within amino-acid biosynthesis; L-arginine biosynthesis; L-arginine from L-ornithine and carbamoyl phosphate: step 1/3. Functionally, reversibly catalyzes the transfer of the carbamoyl group from carbamoyl phosphate (CP) to the N(epsilon) atom of ornithine (ORN) to produce L-citrulline. This chain is Ornithine carbamoyltransferase, found in Halalkalibacterium halodurans (strain ATCC BAA-125 / DSM 18197 / FERM 7344 / JCM 9153 / C-125) (Bacillus halodurans).